Consider the following 473-residue polypeptide: Cysteine--tRNA ligase (473 aa).

Residue C29 participates in Zn(2+) binding. The 'HIGH' region signature appears at 31 to 41 (ATVQSAPHIGH). Zn(2+) contacts are provided by C207, H232, and E236. Positions 263-267 (KMSKS) match the 'KMSKS' region motif. Residue K266 coordinates ATP.

The protein belongs to the class-I aminoacyl-tRNA synthetase family. As to quaternary structure, monomer. Zn(2+) is required as a cofactor.

It localises to the cytoplasm. The enzyme catalyses tRNA(Cys) + L-cysteine + ATP = L-cysteinyl-tRNA(Cys) + AMP + diphosphate. This Corynebacterium kroppenstedtii (strain DSM 44385 / JCM 11950 / CIP 105744 / CCUG 35717) protein is Cysteine--tRNA ligase.